A 344-amino-acid polypeptide reads, in one-letter code: N-acetyl-gamma-glutamyl-phosphate reductase (344 aa).

Residue Cys-147 is part of the active site.

Belongs to the NAGSA dehydrogenase family. Type 1 subfamily.

It localises to the cytoplasm. The enzyme catalyses N-acetyl-L-glutamate 5-semialdehyde + phosphate + NADP(+) = N-acetyl-L-glutamyl 5-phosphate + NADPH + H(+). Its pathway is amino-acid biosynthesis; L-arginine biosynthesis; N(2)-acetyl-L-ornithine from L-glutamate: step 3/4. Catalyzes the NADPH-dependent reduction of N-acetyl-5-glutamyl phosphate to yield N-acetyl-L-glutamate 5-semialdehyde. The polypeptide is N-acetyl-gamma-glutamyl-phosphate reductase (Bacillus amyloliquefaciens (Bacillus velezensis)).